A 238-amino-acid chain; its full sequence is NAD(P)H-quinone oxidoreductase subunit K 1 (238 aa).

Cysteine 54, cysteine 55, cysteine 119, and cysteine 150 together coordinate [4Fe-4S] cluster.

It belongs to the complex I 20 kDa subunit family. As to quaternary structure, NDH-1 can be composed of about 15 different subunits; different subcomplexes with different compositions have been identified which probably have different functions. The cofactor is [4Fe-4S] cluster.

It is found in the cellular thylakoid membrane. The enzyme catalyses a plastoquinone + NADH + (n+1) H(+)(in) = a plastoquinol + NAD(+) + n H(+)(out). It catalyses the reaction a plastoquinone + NADPH + (n+1) H(+)(in) = a plastoquinol + NADP(+) + n H(+)(out). In terms of biological role, NDH-1 shuttles electrons from an unknown electron donor, via FMN and iron-sulfur (Fe-S) centers, to quinones in the respiratory and/or the photosynthetic chain. The immediate electron acceptor for the enzyme in this species is believed to be plastoquinone. Couples the redox reaction to proton translocation, and thus conserves the redox energy in a proton gradient. Cyanobacterial NDH-1 also plays a role in inorganic carbon-concentration. In Cyanothece sp. (strain PCC 7425 / ATCC 29141), this protein is NAD(P)H-quinone oxidoreductase subunit K 1.